Consider the following 5478-residue polypeptide: Mucin-12 (5478 aa).

A signal peptide spans 1-16 (MLVIWILTLALRLCAS). Residues 17-5380 (VTTVTPEGSA…EFNIAKSLVY (5364 aa)) lie on the Extracellular side of the membrane. N154, N170, and N176 each carry an N-linked (GlcNAc...) asparagine glycan. The tract at residues 212–737 (LDSSTNSGHS…GSTETTLLPD (526 aa)) is disordered. The stretch at 222–240 (EESTVSHSGPGATGTTLFP) is repeat 1. The interval 222–4761 (EESTVSHSGP…PGSTQTMHFP (4540 aa)) is 28 X 19 AA approximate tandem repeats of E-E-S-X-X-X-H-X-X-P-X-X-T-X-T-X-X-X-P. 4 stretches are compositionally biased toward polar residues: residues 226 to 246 (VSHSGPGATGTTLFPSHSATS), 255 to 288 (SPITSASMETTALPGSTTTAGLSEKSTTFYSSPR), 296 to 313 (PARTTSSGVSEKSTTSHS), and 325 to 342 (DSTTMPGVSQESTASHSI). Positions 343–366 (PGSTDTTLSPGTTTPSSLGPESTT) are enriched in low complexity. Positions 367-387 (FHSSPGYTKTTRLPDNTTTSG) are enriched in polar residues. An N-linked (GlcNAc...) asparagine glycan is attached at N382. The span at 396-413 (HSSTGSPHTTLSPSSSTT) shows a compositional bias: low complexity. A compositionally biased stretch (polar residues) spans 419-440 (TTFQSWPSSKDTSPAPSGTTSA). Composition is skewed to low complexity over residues 445–466 (STTYHSSPSSTPTTHFSASSTT) and 478–495 (SSPVATATTPPPARSATS). Repeat copies occupy residues 471–489 (EESTPVHSSPVATATTPPP) and 499–517 (EESTAYHRSPGSTQTMHFP). Residues 531–554 (TFHGSTTHTKSSTPSTTAALAHTS) show a composition bias toward low complexity. Composition is skewed to polar residues over residues 555 to 575 (YHSSLGSTETTHFRDSSTISG) and 608 to 648 (STPS…SPDT). Positions 654 to 669 (SMTSSGVSEESTTSHS) are enriched in low complexity. Repeat unit 4 spans residues 662–680 (EESTTSHSRPGSTHTTAFP). 2 stretches are compositionally biased toward polar residues: residues 670 to 715 (RPGS…TASS) and 722 to 737 (TFHSRPGSTETTLLPD). N738 is a glycosylation site (N-linked (GlcNAc...) asparagine). Disordered stretches follow at residues 749–4847 (MPVH…HFTT), 4887–5034 (SSRS…THTV), 5048–5071 (STAFHSSSDATGTTPLPARSTASD), and 5093–5112 (ASSSTSGLTEESTTFHTSPS). Composition is skewed to polar residues over residues 751 to 783 (VHSSTRSPHTTLSPAGSTTRQGESTTFHSWPSS) and 792 to 842 (TTTS…TQTM). The stretch at 827-845 (EESTTYHSSPGSTQTMHFP) is repeat 5. A compositionally biased stretch (low complexity) spans 859 to 877 (TSHSSTTHTISSAPSTTSA). 2 stretches are compositionally biased toward polar residues: residues 884–899 (SYHSSPGSTATTHFPD) and 928–970 (RSTT…TTFH). A compositionally biased stretch (low complexity) spans 971–1007 (SSPRSPATTLSPASTTSSGVSEESTTSRSRPGSTHTT). The segment covering 1009-1021 (FPDSTTTPGLSRH) has biased composition (polar residues). A compositionally biased stretch (low complexity) spans 1022-1065 (STTSHSSPGSTDTTLLPASTTTSGPSQESTTSHSSSGSTDTALS). 2 stretches are compositionally biased toward polar residues: residues 1066–1101 (PGSTTALSFGQESTTFHSNPGSTHTTLFPDSTTSSG) and 1108–1138 (RVHSSTGSPRTTLSPASSTSPGLQGESTAFQ). A compositionally biased stretch (low complexity) spans 1139–1157 (THPASTHTTPSPPSTATAP). Copy 6 of the repeat occupies 1159–1177 (EESTTYHRSPGSTPTTHFP). Polar residues-rich tracts occupy residues 1160–1184 (ESTTYHRSPGSTPTTHFPASSTTSG) and 1191–1207 (IFHSSPDASGTTPSSAH). Low complexity-rich tracts occupy residues 1208–1220 (STTSGRGESTTSR), 1229–1241 (TTLPGSTTTPGLS), and 1249–1262 (SSPRSPTTTLSPAS). Composition is skewed to polar residues over residues 1271-1324 (ESTT…TTSV), 1331-1357 (TFHSRPASTHTTLFTEDSTTSGLTEES), and 1364-1377 (PASTQTGLPATLTT). 2 stretches are compositionally biased toward low complexity: residues 1384–1396 (STTFPSSSGSTGT) and 1411–1438 (ESTPSRLSPSSTETTTLPGSPTTPSLSE). A compositionally biased stretch (polar residues) spans 1439–1448 (KSTTFYTSPR). A compositionally biased stretch (low complexity) spans 1458–1481 (TTTSSGVSEESSTSHSQPGSTHTT). Repeat 7 spans residues 1466 to 1484 (EESSTSHSQPGSTHTTAFP). Positions 1483–1537 (FPDSTTTSDLSQEPTTSHSSQGSTEATLSPGSTTASSLGQQSTTFHSSPGDTETT) are enriched in polar residues. A compositionally biased stretch (low complexity) spans 1552-1568 (STPTHSSTGSLHTTLTP). Composition is skewed to polar residues over residues 1569–1586 (ASSTSAGLQEESTTFQSW) and 1606–1630 (VSTTYHSRPSSTPTTHFSASSTTLG). Residues 1633–1651 (EESTTVHSSPGATGTALFP) form repeat 8. Residues 1653-1708 (RSATSVLVGEPTTSPISSGSTETTALPGSTTTAGLSEKSTTFYSSPRSPDTTLSPA) are compositionally biased toward polar residues. A compositionally biased stretch (low complexity) spans 1709-1724 (STTSSGVSEESTTSHS). Copy 9 of the repeat occupies 1717 to 1735 (EESTTSHSRPGSTHTTAFP). 2 stretches are compositionally biased toward polar residues: residues 1725–1797 (RPGS…TTAS) and 1805–1840 (PVHSSTGSPHTTLSPAGSTTRQGESTTFQSWPSSKD). N1793 is a glycosylation site (N-linked (GlcNAc...) asparagine). Low complexity-rich tracts occupy residues 1856–1877 (STTSHGSPSSTPTTHFSASSTT) and 1889–1906 (SSPVATATTPSPARSTTS). A run of 2 repeats spans residues 1882-1900 (EESTTVHSSPVATATTPSP) and 1910-1928 (EESTAYHSSPGSTQTMHFP). Positions 1914-1935 (AYHSSPGSTQTMHFPESSTASG) are enriched in polar residues. Residues 1943–1959 (SHSSTTHTISSPPSTTS) are compositionally biased toward low complexity. Polar residues-rich tracts occupy residues 1967–1982 (SYHSSPGSTATTHFPD) and 2011–2053 (RSTT…TTFH). A compositionally biased stretch (low complexity) spans 2054 to 2082 (SSPRSPATTLSPASTTSSGVSEESTTSHS). Residues 2075-2093 (EESTTSHSRPGSTHTTAFP) form repeat 12. Over residues 2083–2104 (RPGSTHTTAFPDSTTTPGLSRH) the composition is skewed to polar residues. The span at 2105 to 2130 (STTSHSSPGSTDTTLLPASTTTSGPS) shows a compositional bias: low complexity. Polar residues-rich tracts occupy residues 2131-2184 (QEST…TSSG) and 2191-2221 (RVHSSTGSPRTTLSPASSTSPGLQGESTAFQ). Over residues 2222–2240 (THPASTHTTPSPPSTATAP) the composition is skewed to low complexity. Repeat unit 13 spans residues 2242 to 2260 (EESTTYHRSPGSTPTTHFP). Composition is skewed to polar residues over residues 2243-2267 (ESTTYHRSPGSTPTTHFPASSTTSG) and 2274-2290 (IFHSSPDASGTTPSSAH). Composition is skewed to low complexity over residues 2291–2303 (STTSGRGESTTSR), 2312–2324 (TTLPGSTTTPGLS), and 2332–2345 (SSPRSPTTTLSPAS). A compositionally biased stretch (polar residues) spans 2354 to 2392 (ESTTSRSQPGSTHSTVSPASTTTPGLSEESTTVYSSSPG). The span at 2393–2407 (STETTVFPRTPTTSV) shows a compositional bias: low complexity. 2 stretches are compositionally biased toward polar residues: residues 2414-2440 (TFHSRPASTHTTLFTEDSTTSGLTEES) and 2447-2460 (PASTQTGLPATLTT). 2 stretches are compositionally biased toward low complexity: residues 2467–2483 (STTFPSSSGSTGTTLSP) and 2494–2521 (ESTPSRLSPSSTETTTLPGSPTTPSLSE). Residues 2522–2531 (KSTTFYTSPR) show a composition bias toward polar residues. Over residues 2541–2564 (TTTSSGVSEESSTSHSQPGSTHTT) the composition is skewed to low complexity. The stretch at 2549-2567 (EESSTSHSQPGSTHTTAFP) is repeat 14. A compositionally biased stretch (polar residues) spans 2566–2578 (FPDSTTTPGLSRH). Positions 2579–2604 (STTSHSSPGSTDTTLLPASTTTSGPS) are enriched in low complexity. Composition is skewed to polar residues over residues 2605 to 2658 (QEST…TSSG) and 2665 to 2695 (RVHSSTGSPRTTLSPASSTSPGLQGESTTFQ). Residues 2696–2714 (THPASTHTTPSPPSTATAP) show a composition bias toward low complexity. Repeat unit 15 spans residues 2716 to 2734 (EESTTYHRSPGSTPTTHFP). Polar residues-rich tracts occupy residues 2717–2741 (ESTTYHRSPGSTPTTHFPASSTTSG) and 2748–2764 (IFHSSPDASGTTPSSAH). 3 stretches are compositionally biased toward low complexity: residues 2765–2777 (STTSGRGESTTSR), 2786–2798 (TTLPGSTTTPGLS), and 2806–2819 (SSPRSPTTTLSPAS). Composition is skewed to polar residues over residues 2828-2881 (ESTT…TTSV), 2888-2914 (TFHSRPASTHTTLFTEDSTTSGLTEES), and 2921-2934 (PASTQTGLPATLTT). Composition is skewed to low complexity over residues 2941 to 2957 (STTFPSSSGSTGTTLSP) and 2968 to 2995 (ESTPSRLSPSSTETTTLPGSPTTPSLSE). Positions 2996–3005 (KSTTFYTSPR) are enriched in polar residues. Residues 3015 to 3038 (TTTSSGVSEESSTSHSQPGSTHTT) are compositionally biased toward low complexity. Repeat 16 spans residues 3023-3041 (EESSTSHSQPGSTHTTAFP). Positions 3040 to 3094 (FPDSTTTSGLSQEPTASHSSQGSTEATLSPGSTTASSLGQQSTTFHSSPGDTETT) are enriched in polar residues. The segment covering 3109-3125 (STPTHSSTGSLHTTLTP) has biased composition (low complexity). Composition is skewed to polar residues over residues 3126–3143 (ASSTSAGLQEESTTFQSW) and 3163–3187 (VSTTYHSRPSSTPTTHFSASSTTLG). Repeat unit 17 spans residues 3190 to 3208 (EESTTVHSSPGATGTALFP). Positions 3210-3265 (RSATSVLVGEPTTSPISSGSTETTALPGSTTTAGLSEKSTTFYSSPRSPDTTLSPA) are enriched in polar residues. The span at 3266-3281 (STTSSGVSEESTTSHS) shows a compositional bias: low complexity. Residues 3274 to 3292 (EESTTSHSRPGSTHTTAFP) form repeat 18. Polar residues-rich tracts occupy residues 3282 to 3354 (RPGS…TTAS) and 3362 to 3397 (PVHSSTGSPHTTLSPAGSTTRQGESTTFQSWPNSKD). The N-linked (GlcNAc...) asparagine glycan is linked to N3350. 2 stretches are compositionally biased toward low complexity: residues 3413–3434 (STTSHGSPSSTPTTHFSASSTT) and 3446–3463 (SSPVATATTPSPARSTTS). Tandem repeats lie at residues 3439-3457 (EESTTVHSSPVATATTPSP) and 3467-3485 (EESTTYHSSPGSTQTMHFP). Polar residues predominate over residues 3468-3482 (ESTTYHSSPGSTQTM). Residues 3499–3517 (TSHSSTTHTISSAPSTTSA) are compositionally biased toward low complexity. 2 stretches are compositionally biased toward polar residues: residues 3524–3539 (SYHSSPGSTATTHFPD) and 3568–3610 (RSTT…TTFH). Low complexity predominate over residues 3611–3639 (SSPRSPATTLSPASTTSSGVSEESTTSHS). Repeat unit 21 spans residues 3632–3650 (EESTTSHSRPGSTHTTAFP). Positions 3640–3661 (RPGSTHTTAFPDSTTTPGLSRH) are enriched in polar residues. The span at 3662-3705 (STTSHSSPGSTDTTLLPASTTTSGSSQESTTSHSSSGSTDTALS) shows a compositional bias: low complexity. Polar residues-rich tracts occupy residues 3706-3741 (PGSTTALSFGQESTTFHSSPGSTHTTLFPDSTTSSG) and 3748-3778 (RVHSSTGSPRTTLSPASSTSPGLQGESTAFQ). A compositionally biased stretch (low complexity) spans 3779 to 3797 (THPASTHTTPSPPSTATAP). Repeat unit 22 spans residues 3799-3817 (EESTTYHRSPGSTPTTHFP). Composition is skewed to polar residues over residues 3800-3824 (ESTTYHRSPGSTPTTHFPASSTTSG) and 3831-3847 (IFHSSPDASGTTPSSAH). Low complexity-rich tracts occupy residues 3848–3860 (STTSGRGESTTSR), 3869–3881 (TTLPGSTTTPGLS), and 3889–3902 (SSPRSPTTTLSPAS). Composition is skewed to polar residues over residues 3911–3963 (ESTT…TTTS), 3971–3997 (TFHSRPASTHTTLFTEDSTTSGLTEES), and 4004–4017 (PASTQTGLPATLTT). 2 stretches are compositionally biased toward low complexity: residues 4024 to 4036 (STTFPSSSGSTGT) and 4051 to 4078 (ESTPSRLSPSSTETTTLPGSPTTPSLSE). Polar residues predominate over residues 4079-4088 (KSTTFYTSPR). Residues 4098–4121 (TTTSSGVSEESSTSHSQPGSTHTT) are compositionally biased toward low complexity. Repeat unit 23 spans residues 4106-4124 (EESSTSHSQPGSTHTTAFP). The segment covering 4123–4177 (FPDSTTTSGLSQEPTTSHSSQGSTEATLSPGSTTASSLGQQSTTFHSSPGDTETT) has biased composition (polar residues). A compositionally biased stretch (low complexity) spans 4192 to 4208 (STPTHSSTGSLHTTLTP). A compositionally biased stretch (polar residues) spans 4209–4226 (ASSTSTGLQEESTTFQSW). Residues 4227–4249 (PSSSDTTPSPPSTTAVPVEVSTT) are compositionally biased toward low complexity. The span at 4250 to 4270 (YHSRPSSTPTTHFSASSTTLG) shows a compositional bias: polar residues. The stretch at 4273 to 4291 (EESTTVHSSPGATGTALFP) is repeat 24. Residues 4293 to 4348 (RSATSVLVGEPTTSPISSGSTETTALPGSTTTAGLSEKSTTFYSSPRSPDTTLSPA) show a composition bias toward polar residues. The segment covering 4349-4364 (STTSSGVSEESTTSHS) has biased composition (low complexity). 2 stretches are compositionally biased toward polar residues: residues 4369–4437 (MHTT…TTAS) and 4445–4480 (PVHSSTGSPHTTLSPAGSTTRQGESTTFQSWPNSKD). A glycan (N-linked (GlcNAc...) asparagine) is linked at N4433. 2 stretches are compositionally biased toward low complexity: residues 4496–4517 (STTSHGSPSSTPTTHFSASSTT) and 4529–4546 (SSPVATATTPSPARSTTS). Repeat copies occupy residues 4522-4540 (EESTTVHSSPVATATTPSP) and 4550-4568 (EESTTYHSSPGSTQTMHFP). Residues 4551–4571 (ESTTYHSSPGSTQTMHFPESN) show a composition bias toward polar residues. An N-linked (GlcNAc...) asparagine glycan is attached at N4571. Low complexity predominate over residues 4582–4600 (TSHSSTTHTISSAPSTTSA). 2 stretches are compositionally biased toward polar residues: residues 4607 to 4622 (SYHSSPGSTATTHFPD) and 4651 to 4688 (RSTTSVLLGESTTSPISSGSMETTALPGSTTTPGLSEK). Low complexity-rich tracts occupy residues 4689-4710 (STTFHSSPSSTPTTHFSASSTT) and 4722-4739 (SSPVATATTPSPARSTTS). 2 repeat units span residues 4715–4733 (EESTTVHSSPVATATTPSP) and 4743–4761 (EESTAYHSSPGSTQTMHFP). The segment covering 4747–4768 (AYHSSPGSTQTMHFPESSTASG) has biased composition (polar residues). A compositionally biased stretch (low complexity) spans 4776 to 4792 (SHSSTTHTISSPPSTTS). Polar residues-rich tracts occupy residues 4800 to 4814 (SYHSSPGSIATTHFP) and 4887 to 4917 (SSRSPDQTLSPASMTSSSISGEPTSLYSQAE). The segment covering 4918–4931 (STHTTAFPASTTTS) has biased composition (low complexity). Composition is skewed to polar residues over residues 4932–5024 (GLSQ…STPF) and 5048–5061 (STAFHSSSDATGTT). Low complexity predominate over residues 5094-5112 (SSSTSGLTEESTTFHTSPS). An EGF-like domain is found at 5116–5154 (TIVSTESLETLAPGLCQEGQIWNGKQCVCPQGYVGYQCL). A disulfide bond links C5144 and C5153. Positions 5168–5275 (LNATLGMTVK…TRTTLLDPDS (108 aa)) constitute an SEA domain. 5 N-linked (GlcNAc...) asparagine glycosylation sites follow: N5169, N5182, N5197, N5228, and N5264. Residues 5226–5233 (LLNGSIVV) carry the Cleavage motif motif. The chain crosses the membrane as a helical span at residues 5381 to 5401 (GIVGAVMAVLLLALIILIILF). The Cytoplasmic portion of the chain corresponds to 5402–5478 (SLSQRKRHRE…QRPEMVASTV (77 aa)).

In terms of tissue distribution, ubiquitous, with higher expression in colon. Down-regulated in colorectal cancer as well as in the colon of patients with ulcerative colitis (UC) and Crohn's disease (CD).

The protein localises to the membrane. In terms of biological role, involved in epithelial cell protection, adhesion modulation, and signaling. May be involved in epithelial cell growth regulation. Stimulated by both cytokine TNF-alpha and TGF-beta in intestinal epithelium. This chain is Mucin-12 (MUC12), found in Homo sapiens (Human).